The primary structure comprises 181 residues: Adenine phosphoribosyltransferase (181 aa).

The protein belongs to the purine/pyrimidine phosphoribosyltransferase family. Homodimer.

The protein localises to the cytoplasm. It catalyses the reaction AMP + diphosphate = 5-phospho-alpha-D-ribose 1-diphosphate + adenine. It participates in purine metabolism; AMP biosynthesis via salvage pathway; AMP from adenine: step 1/1. In terms of biological role, catalyzes a salvage reaction resulting in the formation of AMP, that is energically less costly than de novo synthesis. The sequence is that of Adenine phosphoribosyltransferase from Vibrio campbellii (strain ATCC BAA-1116).